The primary structure comprises 411 residues: Lissencephaly-1 homolog (411 aa).

The LisH domain maps to 9-41 (QREELNQAIADYLGTNGYADSLEAFRKEADLST). A coiled-coil region spans residues 56–83 (TSVIRLQKKVMELEAKLTEAEKEVIEGA). WD repeat units follow at residues 106-147 (GHRA…RTLK), 148-187 (GHTDSVQDVAFDAQGKLLVSCSADLSIKLWDFQQSYECVK), 191-230 (GHDHNVSSVAFVPAGDYVLSASRDRTIKMWEVATGYCVKT), 233-272 (GHREWVRMVRVHIEGSIFATCSNDHTIRVWLTNSKDCKVE), 275-334 (DHEH…CLLT), 337-376 (GHDNWVRGLAFHPGGKYLVSASDDKTIRVWDLRNKRCMKT), and 379-411 (AHQHFCTSIDFHKAHPYVISGSVDQTVKVWECR).

Belongs to the WD repeat LIS1/nudF family.

It is found in the cytoplasm. The protein localises to the cytoskeleton. Its subcellular location is the microtubule organizing center. It localises to the centrosome. In terms of biological role, positively regulates the activity of the minus-end directed microtubule motor protein dynein. May enhance dynein-mediated microtubule sliding by targeting dynein to the microtubule plus end. Required for several dynein- and microtubule-dependent processes. In Drosophila grimshawi (Hawaiian fruit fly), this protein is Lissencephaly-1 homolog.